A 542-amino-acid polypeptide reads, in one-letter code: Serine/threonine-protein phosphatase 2A regulatory subunit pptr-1 (542 aa).

Disordered stretches follow at residues 1-28 and 500-542; these read MHGSGHSLTGAPHQIPPPRTQGAATGGQ and DYLK…PAKK. The span at 528–542 shows a compositional bias: polar residues; that stretch reads KKSSTGSETTTPAKK.

Belongs to the phosphatase 2A regulatory subunit B56 family. As to quaternary structure, part of a complex consisting of a common heterodimeric core enzyme, composed of catalytic subunit let-92 and constant regulatory subunit paa-1, that associates with a variety of regulatory subunits which confer distinct properties to the holoenzyme. Interacts with akt-1 but not akt-2. Interacts with sgk-1. Interacts with P granule components meg-1, meg-3 and meg-4. As to expression, expressed in pharynx, vulva and spermatheca.

It localises to the cytoplasm. Its function is as follows. Probable regulatory subunit of serine/threonine-protein phosphatase let-92 which negatively regulates the insulin receptor signaling cascade composed of daf-2, age-1, akt-1, akt-2 and sgk-1 by promoting the dephosphorylation of akt-1 on 'Thr-350'. Negatively regulates several functions controlled by the insulin pathway including dauer formation, lifespan, fat storage and stress resistance. Plays a role in the asymmetric segregation of the P granule components during embryonic cell divisions but does not play an essential role in specifying germ cell fate. Within a PP2A phosphatase complex, acts redundantly with pptr-2, to dephosphorylate P granule components including meg-1 and meg-3 to promote the assembly and accumulation of zygotic P granules in the posterior cytoplasm during zygote polarization, and thus maintain P granule distribution and segregation in early stage embryos following meiosis. In adults, required to promote germ cell proliferation and differentiation when exposed to thermic stress. The chain is Serine/threonine-protein phosphatase 2A regulatory subunit pptr-1 from Caenorhabditis elegans.